The primary structure comprises 98 residues: NADH-ubiquinone oxidoreductase chain 4L (98 aa).

Helical transmembrane passes span 1-21 (MTLV…GLLM), 26-46 (LMSA…LATI), and 59-79 (MPII…ALLV).

This sequence belongs to the complex I subunit 4L family. Core subunit of respiratory chain NADH dehydrogenase (Complex I) which is composed of 45 different subunits.

The protein localises to the mitochondrion inner membrane. It carries out the reaction a ubiquinone + NADH + 5 H(+)(in) = a ubiquinol + NAD(+) + 4 H(+)(out). In terms of biological role, core subunit of the mitochondrial membrane respiratory chain NADH dehydrogenase (Complex I) which catalyzes electron transfer from NADH through the respiratory chain, using ubiquinone as an electron acceptor. Part of the enzyme membrane arm which is embedded in the lipid bilayer and involved in proton translocation. This chain is NADH-ubiquinone oxidoreductase chain 4L (MT-ND4L), found in Pontoporia blainvillei (Franciscana).